The sequence spans 213 residues: UPF0301 protein Aave_0907 (213 aa).

Positions 93–120 are disordered; that stretch reads MGPSSGKQAAGEGGAQAEGEGAEESAYA.

Belongs to the UPF0301 (AlgH) family.

In Paracidovorax citrulli (strain AAC00-1) (Acidovorax citrulli), this protein is UPF0301 protein Aave_0907.